We begin with the raw amino-acid sequence, 151 residues long: Arginine repressor (151 aa).

It belongs to the ArgR family.

It localises to the cytoplasm. The protein operates within amino-acid biosynthesis; L-arginine biosynthesis [regulation]. Functionally, regulates arginine biosynthesis genes. This Moorella thermoacetica (strain ATCC 39073 / JCM 9320) protein is Arginine repressor.